A 278-amino-acid polypeptide reads, in one-letter code: Soluble NSF attachment protein homolog FPV011 (278 aa).

Belongs to the SNAP family.

The sequence is that of Soluble NSF attachment protein homolog FPV011 from Fowlpox virus (strain NVSL) (FPV).